Reading from the N-terminus, the 191-residue chain is dTTP/UTP pyrophosphatase (191 aa).

D69 serves as the catalytic Proton acceptor.

It belongs to the Maf family. YhdE subfamily. A divalent metal cation serves as cofactor.

The protein localises to the cytoplasm. The enzyme catalyses dTTP + H2O = dTMP + diphosphate + H(+). The catalysed reaction is UTP + H2O = UMP + diphosphate + H(+). In terms of biological role, nucleoside triphosphate pyrophosphatase that hydrolyzes dTTP and UTP. May have a dual role in cell division arrest and in preventing the incorporation of modified nucleotides into cellular nucleic acids. This chain is dTTP/UTP pyrophosphatase, found in Pelotomaculum thermopropionicum (strain DSM 13744 / JCM 10971 / SI).